A 423-amino-acid chain; its full sequence is Adenylosuccinate synthetase (423 aa).

GTP-binding positions include 12 to 18 (GDEGKGK) and 40 to 42 (GHT). Catalysis depends on Asp-13, which acts as the Proton acceptor. The Mg(2+) site is built by Asp-13 and Gly-40. IMP-binding positions include 13–16 (DEGK), 38–41 (NAGH), Thr-129, Arg-143, Gln-221, Thr-236, and Arg-300. His-41 functions as the Proton donor in the catalytic mechanism. 296-302 (AVTGRKR) serves as a coordination point for substrate. Residues Arg-302, 328–330 (KSD), and 408–410 (SVG) each bind GTP.

The protein belongs to the adenylosuccinate synthetase family. As to quaternary structure, homodimer. Mg(2+) serves as cofactor.

The protein resides in the cytoplasm. The catalysed reaction is IMP + L-aspartate + GTP = N(6)-(1,2-dicarboxyethyl)-AMP + GDP + phosphate + 2 H(+). The protein operates within purine metabolism; AMP biosynthesis via de novo pathway; AMP from IMP: step 1/2. Plays an important role in the de novo pathway of purine nucleotide biosynthesis. Catalyzes the first committed step in the biosynthesis of AMP from IMP. This Parabacteroides distasonis (strain ATCC 8503 / DSM 20701 / CIP 104284 / JCM 5825 / NCTC 11152) protein is Adenylosuccinate synthetase.